A 286-amino-acid polypeptide reads, in one-letter code: Bifunctional protein FolD (286 aa).

NADP(+) contacts are provided by residues 165-167 (GRS), Ser190, and Val231.

Belongs to the tetrahydrofolate dehydrogenase/cyclohydrolase family. Homodimer.

The enzyme catalyses (6R)-5,10-methylene-5,6,7,8-tetrahydrofolate + NADP(+) = (6R)-5,10-methenyltetrahydrofolate + NADPH. It carries out the reaction (6R)-5,10-methenyltetrahydrofolate + H2O = (6R)-10-formyltetrahydrofolate + H(+). The protein operates within one-carbon metabolism; tetrahydrofolate interconversion. Its function is as follows. Catalyzes the oxidation of 5,10-methylenetetrahydrofolate to 5,10-methenyltetrahydrofolate and then the hydrolysis of 5,10-methenyltetrahydrofolate to 10-formyltetrahydrofolate. In Bacillus cereus (strain B4264), this protein is Bifunctional protein FolD.